Here is a 442-residue protein sequence, read N- to C-terminus: MAITVRRSTMVRPAWETPRVRLWNSNLDLVVPRFHTPSVYFYRRGPEGGGAPEGFFDGERMRRALAEALVPFYPMAGRLARDEDGRVEIDCNGEGVLFVEADAPDASVDDYGDFAPTMELKRLIPAVDYTDDISSFSLLVLQVTYFKCGGVSLGVGMQHHVADGMSGLHFINSWSDLCRGTQIAIMPFIDRTLLRARDPPTPSYPHVEYQPAPAMLSSVPQSVTANKTTPPPTAVDIFKLTRSDLGRLRSQLPSGEGAPRFSTYAVLAAHVWRCVSLARGLPSEQPTKLYCATDGRQRLQPPLPEGYFGNVIFTATPLAEAGKVTSGLADGAAVIQEALDRMNDSYCRSALDYLELQPDLSALVRGAHTFRCPNLGLTSWVRLPIHDADFGWGRPVFMGPGGIAYEGLAFVLPSANKDGSLSIAISLQAEHMEKFRKLIFEV.

Residues His-159 and Asp-389 each act as proton acceptor in the active site.

Belongs to the plant acyltransferase family. Expressed in roots, leaves, stems and seeds.

Functionally, hydroxycinnamoyl transferase that catalyzes the transfer of an acyl from p-coumaryol-CoA to various acyl acceptors. Can use feruloyl-CoA and caffeoyl-CoA as acyl donors. The polypeptide is Hydroxycinnamoyltransferase 1 (Oryza sativa subsp. japonica (Rice)).